The sequence spans 540 residues: Probable G-protein coupled receptor 75 (540 aa).

The Extracellular portion of the chain corresponds to 1-46; sequence MNTSAPLQNVPNATLLNMPPLHGGNSTSLQEGLRDFIHTATLVTCT. 2 N-linked (GlcNAc...) asparagine glycosylation sites follow: asparagine 2 and asparagine 25. The helical transmembrane segment at 47–67 threads the bilayer; it reads FLLAIIFCLGSYGNFIVFLSF. At 68–86 the chain is on the cytoplasmic side; sequence FDPSFRKFRTNFDFMILNL. Residues 87-107 form a helical membrane-spanning segment; the sequence is SFCDLFICGVTAPMFTFVLFF. Residues 108-120 lie on the Extracellular side of the membrane; sequence SSASSIPDSFCFT. Residues 121–141 form a helical membrane-spanning segment; sequence FHLTSSGFVIMSLKMVAVIAL. The Cytoplasmic portion of the chain corresponds to 142–160; the sequence is HRLRMVMGKQPNCTASFSC. Residues 161 to 181 traverse the membrane as a helical segment; the sequence is ILLLTLLLWATSFTLATLATL. At 182-205 the chain is on the extracellular side; the sequence is RTNKSHLCLPMSSLMDGEGKAILS. Asparagine 184 is a glycosylation site (N-linked (GlcNAc...) asparagine). A helical transmembrane segment spans residues 206–226; the sequence is LYVVDFTFCVAVVSVSYIMIA. Topologically, residues 227-318 are cytoplasmic; the sequence is QTLRKNAQVK…INFSTAKDSK (92 aa). A helical membrane pass occupies residues 319–339; that stretch reads AVVTCVVIVLSVLVCCLPLGI. Topologically, residues 340–350 are extracellular; sequence SLVQMVLSDNG. Residues 351 to 371 form a helical membrane-spanning segment; the sequence is SFILYQFELFGFTLIFFKSGL. At 372–540 the chain is on the cytoplasmic side; the sequence is NPFIYSRNSA…SAKQIPIPSV (169 aa). The tract at residues 443–475 is disordered; sequence DQACGPSHSKESAASPKVSAGHQPCGQSSSTPI.

This sequence belongs to the G-protein coupled receptor 1 family. In terms of tissue distribution, highly expressed in brain and heart. Also detected in skeletal muscle, liver and kidney. Also expressed by islet cells (at protein level).

The protein localises to the cell membrane. G protein-coupled receptor that is activated by the chemokine CCL5/RANTES. Probably coupled to heterotrimeric Gq proteins, it stimulates inositol trisphosphate production and calcium mobilization upon activation. Together with CCL5/RANTES, may play a role in neuron survival through activation of a downstream signaling pathway involving the PI3, Akt and MAP kinases. CCL5/RANTES may also regulate insulin secretion by pancreatic islet cells through activation of this receptor. The chain is Probable G-protein coupled receptor 75 (Gpr75) from Mus musculus (Mouse).